A 226-amino-acid chain; its full sequence is Ribose-5-phosphate isomerase A (226 aa).

Residues 33-36 (TGST), 86-89 (DGAD), and 99-102 (KGGG) each bind substrate. Glu-108 acts as the Proton acceptor in catalysis. Residue Lys-126 coordinates substrate.

This sequence belongs to the ribose 5-phosphate isomerase family. Homodimer.

The catalysed reaction is aldehydo-D-ribose 5-phosphate = D-ribulose 5-phosphate. It functions in the pathway carbohydrate degradation; pentose phosphate pathway; D-ribose 5-phosphate from D-ribulose 5-phosphate (non-oxidative stage): step 1/1. Catalyzes the reversible conversion of ribose-5-phosphate to ribulose 5-phosphate. The polypeptide is Ribose-5-phosphate isomerase A (Bordetella bronchiseptica (strain ATCC BAA-588 / NCTC 13252 / RB50) (Alcaligenes bronchisepticus)).